We begin with the raw amino-acid sequence, 313 residues long: Olfactory receptor 4M1 (313 aa).

Topologically, residues 1–25 (MEPANDTTVTEFILTGLSQTREVQL) are extracellular. N-linked (GlcNAc...) asparagine glycosylation occurs at asparagine 5. A helical transmembrane segment spans residues 26 to 46 (VLFVIFLSFYLFILPVNILII). Residues 47-57 (CTIRLDSHLSS) are Cytoplasmic-facing. A helical membrane pass occupies residues 58 to 78 (PMYFLLANLAFLDIWYSSITA). At 79–97 (PKMLVDFFVERKIISFGGC) the chain is on the extracellular side. Cysteine 97 and cysteine 179 are joined by a disulfide. The helical transmembrane segment at 98–118 (IAQLFFLHFVGASEMFLLTVM) threads the bilayer. At 119–142 (AFDRYAAICRPLHYATIMNRRLCC) the chain is on the cytoplasmic side. Residues 143–163 (ILVALSWTGGFVHSIIQVALI) traverse the membrane as a helical segment. The Extracellular portion of the chain corresponds to 164-204 (VRLPFCGPNELDNYFCDITQVVRIACANTFLEEMVMIFSSG). A helical membrane pass occupies residues 205–225 (LISVVCFIALLMSYAFLLTML). Residues 226–238 (KKHSSSGESTSRA) are Cytoplasmic-facing. A helical membrane pass occupies residues 239 to 259 (ISTCYSHITIVVLMFGPSIYI). Topologically, residues 260-270 (YARPFDSFSLD) are extracellular. The chain crosses the membrane as a helical span at residues 271 to 291 (KVVSVFHTVIFPLLNPIIYTL). Topologically, residues 292–313 (RNKEVKAAMRKLVNRYIFCKEK) are cytoplasmic.

Belongs to the G-protein coupled receptor 1 family. Highly expressed in liver but not in adipose tissue. Also expressed at high level in testis.

It localises to the cell membrane. Functionally, olfactory receptor that acts as a receptor of Asprosin hormone at the surface of hepatocytes to promote hepatocyte glucose release. Also binds Asprosin in the arcuate nucleus of the hypothalamus, thereby stimulating appetite by promoting orexigenic AgRP neuronal activity. In testis, Asprosin-binding promotes sperm progressive motility and enhances male fertility. The activity of this receptor is mediated by G proteins which activate adenylyl cyclase, resulting in an elevation of intracellular cAMP. The protein is Olfactory receptor 4M1 of Mus musculus (Mouse).